The following is a 688-amino-acid chain: Sodium channel and clathrin linker 1 (688 aa).

N-acetylalanine is present on Ala2. Positions 59-673 (LIAEYEKHLE…SASQQLSVIT (615 aa)) form a coiled coil. Ser681 bears the Phosphoserine mark.

As to quaternary structure, interacts with SCN10A and clathrin. Identified in a complex containing SCN10A, clathrin and SCLT1. As to expression, detected in small neurons in dorsal root ganglia. Detected in C-type fibers of sciatic nerve (at protein level).

It localises to the cytoplasm. It is found in the cytoskeleton. Its subcellular location is the microtubule organizing center. The protein resides in the centrosome. The protein localises to the centriole. Functionally, adapter protein that links SCN10A to clathrin. Regulates SCN10A channel activity, possibly by promoting channel internalization. The protein is Sodium channel and clathrin linker 1 (Sclt1) of Rattus norvegicus (Rat).